The chain runs to 49 residues: Large ribosomal subunit protein bL33A (49 aa).

Belongs to the bacterial ribosomal protein bL33 family.

In Bacillus cytotoxicus (strain DSM 22905 / CIP 110041 / 391-98 / NVH 391-98), this protein is Large ribosomal subunit protein bL33A.